The following is a 266-amino-acid chain: 4-hydroxy-tetrahydrodipicolinate reductase (266 aa).

10–15 serves as a coordination point for NAD(+); the sequence is GPRGRM. K38 is an NADP(+) binding site. Residues 99 to 101 and 125 to 128 each bind NAD(+); these read GTT and APNF. Catalysis depends on H155, which acts as the Proton donor/acceptor. H156 contributes to the (S)-2,3,4,5-tetrahydrodipicolinate binding site. K159 serves as the catalytic Proton donor. Position 165 to 166 (165 to 166) interacts with (S)-2,3,4,5-tetrahydrodipicolinate; sequence GT.

The protein belongs to the DapB family.

The protein resides in the cytoplasm. The catalysed reaction is (S)-2,3,4,5-tetrahydrodipicolinate + NAD(+) + H2O = (2S,4S)-4-hydroxy-2,3,4,5-tetrahydrodipicolinate + NADH + H(+). The enzyme catalyses (S)-2,3,4,5-tetrahydrodipicolinate + NADP(+) + H2O = (2S,4S)-4-hydroxy-2,3,4,5-tetrahydrodipicolinate + NADPH + H(+). It participates in amino-acid biosynthesis; L-lysine biosynthesis via DAP pathway; (S)-tetrahydrodipicolinate from L-aspartate: step 4/4. In terms of biological role, catalyzes the conversion of 4-hydroxy-tetrahydrodipicolinate (HTPA) to tetrahydrodipicolinate. This chain is 4-hydroxy-tetrahydrodipicolinate reductase, found in Bacillus cereus (strain ATCC 10987 / NRS 248).